The primary structure comprises 63 residues: Large ribosomal subunit protein bL32 (63 aa).

The tract at residues 1 to 27 is disordered; it reads MANPKAKMSKSRRDKRRAQFNARTKPA. Basic residues predominate over residues 7–18; it reads KMSKSRRDKRRA.

It belongs to the bacterial ribosomal protein bL32 family.

In Pelodictyon phaeoclathratiforme (strain DSM 5477 / BU-1), this protein is Large ribosomal subunit protein bL32.